Reading from the N-terminus, the 256-residue chain is Anamorsin homolog (256 aa).

An N-terminal SAM-like domain region spans residues 1 to 136; sequence MNSLSLELNK…DTNESSTINI (136 aa). The segment at 126–148 is disordered; that stretch reads WDTNESSTINIPSTSSNNPWASI. The segment covering 131–144 has biased composition (low complexity); it reads SSTINIPSTSSNNP. The tract at residues 137 to 166 is linker; that stretch reads PSTSSNNPWASIEGGDRINENDLVSENDKT. Positions 176, 185, 188, and 190 each coordinate [2Fe-2S] cluster. A fe-S binding site A region spans residues 176–190; the sequence is CEVGKTKKACKNCTC. 4 residues coordinate [4Fe-4S] cluster: C217, C220, C228, and C231. 2 consecutive short sequence motifs (cx2C motif) follow at residues 217-220 and 228-231; these read CGNC and CGGC. The interval 217-231 is fe-S binding site B; sequence CGNCSLGDAFRCGGC.

Belongs to the anamorsin family. In terms of assembly, monomer. [2Fe-2S] cluster is required as a cofactor. The cofactor is [4Fe-4S] cluster.

It is found in the cytoplasm. It localises to the mitochondrion intermembrane space. Component of the cytosolic iron-sulfur (Fe-S) protein assembly (CIA) machinery. Required for the maturation of extramitochondrial Fe-S proteins. Part of an electron transfer chain functioning in an early step of cytosolic Fe-S biogenesis, facilitating the de novo assembly of a [4Fe-4S] cluster on the cytosolic Fe-S scaffold complex. Electrons are transferred from NADPH via a FAD- and FMN-containing diflavin oxidoreductase. Together with the diflavin oxidoreductase, also required for the assembly of the diferric tyrosyl radical cofactor of ribonucleotide reductase (RNR), probably by providing electrons for reduction during radical cofactor maturation in the catalytic small subunit. In Dictyostelium discoideum (Social amoeba), this protein is Anamorsin homolog (rsc43).